We begin with the raw amino-acid sequence, 730 residues long: 1,4-alpha-glucan branching enzyme GlgB (730 aa).

Asp-405 functions as the Nucleophile in the catalytic mechanism. Glu-458 functions as the Proton donor in the catalytic mechanism.

The protein belongs to the glycosyl hydrolase 13 family. GlgB subfamily. Monomer.

It carries out the reaction Transfers a segment of a (1-&gt;4)-alpha-D-glucan chain to a primary hydroxy group in a similar glucan chain.. It participates in glycan biosynthesis; glycogen biosynthesis. Catalyzes the formation of the alpha-1,6-glucosidic linkages in glycogen by scission of a 1,4-alpha-linked oligosaccharide from growing alpha-1,4-glucan chains and the subsequent attachment of the oligosaccharide to the alpha-1,6 position. This chain is 1,4-alpha-glucan branching enzyme GlgB, found in Haemophilus influenzae (strain 86-028NP).